The primary structure comprises 299 residues: MSSIKVECVLRENYRCGESPVWEEASQSLLFVDIPSKIICRWDTVSNQVQRVAVDAPVSSVALRQLGGYVATIGTKFCALNWENQSVFVLAMVDEDKKNNRFNDGKVDPAGRYFAGTMAEETAPAVLERHQGSLYSLFPDHSVKKYFDQVDISNGLDWSLDHKIFYYIDSLSYTVDAFDYDLQTGQISNRRIVYKMEKDEQIPDGMCIDAEGKLWVACYNGGRVIRLDPETGKRLQTVKLPVDKTTSCCFGGKDYSEMYVTCARDGLNAEGLLRQPDAGNIFKITGLGVKGIAPYSYAG.

E18 serves as a coordination point for a divalent metal cation. 3 residues coordinate substrate: R101, N103, and E121. An N6-succinyllysine modification is found at K144. A divalent metal cation contacts are provided by N154 and D204. The active-site Proton donor/acceptor is the D204. N6-succinyllysine occurs at positions 244 and 253.

It belongs to the SMP-30/CGR1 family. Monomer. The cofactor is Zn(2+). It depends on Mn(2+) as a cofactor. Ca(2+) is required as a cofactor. Mg(2+) serves as cofactor. Mainly present in the liver. Weak expression was found in the brain, lung and kidney.

The protein localises to the cytoplasm. It catalyses the reaction D-glucono-1,5-lactone + H2O = D-gluconate + H(+). Its pathway is cofactor biosynthesis; L-ascorbate biosynthesis via UDP-alpha-D-glucuronate pathway; L-ascorbate from UDP-alpha-D-glucuronate: step 3/4. Its function is as follows. Gluconolactonase with low activity towards other sugar lactones, including gulonolactone and galactonolactone. Catalyzes a key step in ascorbic acid (vitamin C) biosynthesis. Can also hydrolyze diisopropyl phosphorofluoridate and phenylacetate (in vitro). Calcium-binding protein. Modulates Ca(2+) signaling, and Ca(2+)-dependent cellular processes and enzyme activities. This is Regucalcin (Rgn) from Mus musculus (Mouse).